The following is a 473-amino-acid chain: Proton-coupled folate transporter (473 aa).

Pro residues predominate over residues 1-20; sequence MAAPSDPPTAATPPAPPPPA. Residues 1–21 are disordered; the sequence is MAAPSDPPTAATPPAPPPPAR. The Cytoplasmic segment spans residues 1–29; that stretch reads MAAPSDPPTAATPPAPPPPARRCLLAPSV. Residues 30-48 traverse the membrane as a helical segment; the sequence is EPLLFLATLALGLQVPLAT. At 49-90 the chain is on the extracellular side; sequence QYLWDRLGAERGYVGPNASSPHGCGNGSGAVDPLREEVEALV. N-linked (GlcNAc...) asparagine glycans are attached at residues Asn65 and Asn74. Cysteines 72 and 306 form a disulfide. A helical transmembrane segment spans residues 91 to 116; that stretch reads AHWNLCINLGGFFVGLFSVTLFGPWS. Asn98 serves as a coordination point for pemetrexed. Residues 117 to 120 lie on the Cytoplasmic side of the membrane; it reads DSVG. A helical membrane pass occupies residues 121-143; sequence RRPVLVLPAVGMAVQAAVYLLVM. Over 144–148 the chain is Extracellular; the sequence is YLRLH. Residues 149-162 form a helical membrane-spanning segment; sequence VAYLLLGRIISGLL. The Cytoplasmic segment spans residues 163 to 185; that stretch reads GDYNLILAGCFASVADSSNQRTR. Residues Asp164 and Glu193 each coordinate H(+). A helical transmembrane segment spans residues 186–211; sequence TFRVAILEACLGVAGMVASVGGGQWR. Glu193 contacts pemetrexed. Topologically, residues 212–216 are extracellular; sequence KAEGY. A helical membrane pass occupies residues 217 to 235; sequence INPFWLVLAASLAAALYAA. The Cytoplasmic segment spans residues 236-274; it reads LCLQETVKQRRAAKLLTLQHYKAVYKLYTAPEDLSSRRK. A helical transmembrane segment spans residues 275 to 297; sequence LALYSLAFFLLVTVHFGTKDLYV. His289 lines the H(+) pocket. At 298–310 the chain is on the extracellular side; it reads LYELGSPLCWASD. The helical transmembrane segment at 311–333 threads the bilayer; that stretch reads LIGYGSAASYLAYLSSLGGLRLL. Position 323 (Tyr323) interacts with pemetrexed. The Cytoplasmic segment spans residues 334–339; that stretch reads QLCLED. Residues 340-359 form a helical membrane-spanning segment; it reads TWVAEIGLISNIAGLVVISL. The Extracellular segment spans residues 360–363; sequence ATTT. Residues 364–384 traverse the membrane as a helical segment; sequence PLMFTGYGIMFLSMAATPVIR. Residues 385–396 lie on the Cytoplasmic side of the membrane; that stretch reads AKLSKLVGETEQ. A helical transmembrane segment spans residues 397-422; that stretch reads GALFASVACVEGLCSLVATGVFNSLY. The pemetrexed site is built by Glu407 and Ser411. The Extracellular segment spans residues 423–430; that stretch reads PSTLHFMR. The chain crosses the membrane as a helical span at residues 431-449; that stretch reads GFPFLFGAILLLIPAAIMG. Residues 450-473 are Cytoplasmic-facing; the sequence is WIEIQDSNLQYSHFSDASSSPADG.

Belongs to the major facilitator superfamily. SLC46A family. In terms of assembly, monomer. As to expression, widely expressed, including brain, aorta, liver, kidney, spleen, small intestine, pancreas, ovary and testis.

Its subcellular location is the cell membrane. The protein localises to the apical cell membrane. It localises to the basolateral cell membrane. It is found in the endosome membrane. The protein resides in the cytoplasm. The enzyme catalyses folate(in) + H(+)(in) = folate(out) + H(+)(out). It catalyses the reaction (6S)-5-methyl-5,6,7,8-tetrahydrofolate(in) + H(+)(in) = (6S)-5-methyl-5,6,7,8-tetrahydrofolate(out) + H(+)(out). The catalysed reaction is methotrexate(in) + H(+)(in) = methotrexate(out) + H(+)(out). It carries out the reaction pemetrexed(in) + H(+)(in) = pemetrexed(out) + H(+)(out). Proton-coupled folate symporter that mediates folate absorption using an H(+) gradient as a driving force. Involved in the intestinal absorption of folates at the brush-border membrane of the proximal jejunum, and the transport from blood to cerebrospinal fluid across the choroid plexus. Functions at acidic pH via alternate outward- and inward-open conformation states. Protonation of residues in the outward open state primes the protein for transport. Binding of folate promotes breaking of salt bridge network and subsequent closure of the extracellular gate, leading to the inward-open state and release of protons and folate. Also able to transport antifolate drugs, such as methotrexate and pemetrexed. Also acts as a lower-affinity, pH-independent heme carrier protein and constitutes the main importer of heme in the intestine. Imports heme in the retina and retinal pigment epithelium, in neurons of the hippocampus, in hepatocytes and in the renal epithelial cells. The chain is Proton-coupled folate transporter from Gallus gallus (Chicken).